The primary structure comprises 177 residues: Alkyl hydroperoxide reductase AhpD (177 aa).

The Proton donor role is filled by C133. C133 and C136 are joined by a disulfide. C136 (cysteine sulfenic acid (-SOH) intermediate) is an active-site residue.

It belongs to the AhpD family.

It carries out the reaction N(6)-[(R)-dihydrolipoyl]-L-lysyl-[lipoyl-carrier protein] + a hydroperoxide = N(6)-[(R)-lipoyl]-L-lysyl-[lipoyl-carrier protein] + an alcohol + H2O. Antioxidant protein with alkyl hydroperoxidase activity. Required for the reduction of the AhpC active site cysteine residues and for the regeneration of the AhpC enzyme activity. This is Alkyl hydroperoxide reductase AhpD from Coxiella burnetii (strain CbuG_Q212) (Coxiella burnetii (strain Q212)).